Reading from the N-terminus, the 956-residue chain is Netrin receptor UNC5D (956 aa).

The signal sequence occupies residues 1 to 30; sequence MGTGAADRSRGARWWLPWLGLCFWAAGAEA. Over 31–382 the chain is Extracellular; sequence ARGADSGEVL…SRRGIENASD (352 aa). Positions 52 to 149 constitute an Ig-like domain; that stretch reads PHFIEEPEDA…LGTSKSRKAS (98 aa). Cystine bridges form between cysteine 73/cysteine 134, cysteine 85/cysteine 132, cysteine 178/cysteine 229, cysteine 262/cysteine 299, cysteine 266/cysteine 303, cysteine 277/cysteine 289, cysteine 318/cysteine 352, cysteine 322/cysteine 357, and cysteine 330/cysteine 342. The interval 89–91 is important for interaction with FLRT2; the sequence is WVH. N-linked (GlcNAc...) asparagine glycans are attached at residues asparagine 115 and asparagine 226. An Ig-like C2-type domain is found at 164–242; it reads QGREVPIEGM…NIVAKRRSLS (79 aa). 2 TSP type-1 domains span residues 250 to 304 and 306 to 358; these read NGGW…ALCP and DGSW…GLCI. The helical transmembrane segment at 383–403 threads the bilayer; sequence IALYSGLGAAVVAVAVLVIGV. The Cytoplasmic portion of the chain corresponds to 404 to 956; that stretch reads TLYRRSHSDY…DFNYSRQNGL (553 aa). The ZU5 domain occupies 545–685; sequence LRTTGVFGHL…FGTYALTGEP (141 aa). A Death domain is found at 862 to 939; that stretch reads QRICATFDTP…RTHTKLSNIT (78 aa).

The protein belongs to the unc-5 family. As to quaternary structure, interacts (via extracellular domain) with FLRT2 and FLRT3 (via extracellular domain); the interaction is direct. Has higher affinity for FLRT2. Identified in a complex with FLRT3 and ADGRL3; does not interact with ADGRL3 by itself. Proteolytically cleaved by caspases during apoptosis. The cleavage does not take place when the receptor is associated with netrin ligand. Its cleavage by caspases is required to induce apoptosis.

Its subcellular location is the cell membrane. Its function is as follows. Receptor for the netrin NTN4 that promotes neuronal cell survival. Plays a role in cell-cell adhesion and cell guidance. Receptor for netrin involved in cell migration. Plays a role in axon guidance by mediating axon repulsion of neuronal growth cones in the developing nervous system upon ligand binding. May play a role in apoptosis in response to DNA damage. It also acts as a dependence receptor required for apoptosis induction when not associated with netrin ligand. Mediates cell-cell adhesion via its interaction with FLRT3 on an adjacent cell. The chain is Netrin receptor UNC5D from Rattus norvegicus (Rat).